We begin with the raw amino-acid sequence, 310 residues long: Porphobilinogen deaminase (310 aa).

Cys-242 is subject to S-(dipyrrolylmethanemethyl)cysteine.

This sequence belongs to the HMBS family. In terms of assembly, monomer. Requires dipyrromethane as cofactor.

It carries out the reaction 4 porphobilinogen + H2O = hydroxymethylbilane + 4 NH4(+). It participates in porphyrin-containing compound metabolism; protoporphyrin-IX biosynthesis; coproporphyrinogen-III from 5-aminolevulinate: step 2/4. Its function is as follows. Tetrapolymerization of the monopyrrole PBG into the hydroxymethylbilane pre-uroporphyrinogen in several discrete steps. In Psychromonas ingrahamii (strain DSM 17664 / CCUG 51855 / 37), this protein is Porphobilinogen deaminase.